The primary structure comprises 242 residues: uncharacterized protein (242 aa).

The segment covering 1–11 (MNFEAASAPSQ) has biased composition (low complexity). The segment at 1-45 (MNFEAASAPSQQPSPTPAPKTEEPKENGGSEQQADQPENSKKDDV) is disordered.

To U.parvum UU171.

This is an uncharacterized protein from Ureaplasma parvum serovar 3 (strain ATCC 700970).